Here is a 376-residue protein sequence, read N- to C-terminus: MRIAAILVAGGSGSRFGSDIPKQFLPVGGKPLIRHGAERLSAKVDLLQPVGCADDIAPLLQGLDHLPIVDGGKERQDSVRAGLEALVPYAPDIVLIHDAARPYFPDHTIEDLIEALQIHDGAIPAVPVADTLKRAAGNIIDSTVPREGLYRAQTPQAFKFSVLLALHRDHPGGATDDAALLDQAGHSVALVPGAEDNIKVTYPADLARVERSMSISMIPRIGTGYDVHAFETGRKLILCGIEVPHHQGLAGHSDADVGIHALCDAIYGALAEGDIGRHFPPTEASWKDADSARFLRHAAERIAARGGFLANADLTLICEKPKITPHAPAMIARLAELLGVSIDKISVKATTSEKLGFTGREEGIAAQAAVIIMIPA.

The tract at residues M1 to R220 is 2-C-methyl-D-erythritol 4-phosphate cytidylyltransferase. The 2-C-methyl-D-erythritol 2,4-cyclodiphosphate synthase stretch occupies residues R220–A376. A divalent metal cation contacts are provided by D226 and H228. Residues D226–H228 and H252–S253 contribute to the 4-CDP-2-C-methyl-D-erythritol 2-phosphate site. H260 is a binding site for a divalent metal cation. 4-CDP-2-C-methyl-D-erythritol 2-phosphate contacts are provided by residues D274 to G276, T350 to E353, F357, and R360.

The protein in the N-terminal section; belongs to the IspD/TarI cytidylyltransferase family. IspD subfamily. In the C-terminal section; belongs to the IspF family. A divalent metal cation serves as cofactor.

It carries out the reaction 2-C-methyl-D-erythritol 4-phosphate + CTP + H(+) = 4-CDP-2-C-methyl-D-erythritol + diphosphate. It catalyses the reaction 4-CDP-2-C-methyl-D-erythritol 2-phosphate = 2-C-methyl-D-erythritol 2,4-cyclic diphosphate + CMP. It participates in isoprenoid biosynthesis; isopentenyl diphosphate biosynthesis via DXP pathway; isopentenyl diphosphate from 1-deoxy-D-xylulose 5-phosphate: step 2/6. It functions in the pathway isoprenoid biosynthesis; isopentenyl diphosphate biosynthesis via DXP pathway; isopentenyl diphosphate from 1-deoxy-D-xylulose 5-phosphate: step 4/6. Functionally, bifunctional enzyme that catalyzes the formation of 4-diphosphocytidyl-2-C-methyl-D-erythritol from CTP and 2-C-methyl-D-erythritol 4-phosphate (MEP) (IspD), and catalyzes the conversion of 4-diphosphocytidyl-2-C-methyl-D-erythritol 2-phosphate (CDP-ME2P) to 2-C-methyl-D-erythritol 2,4-cyclodiphosphate (ME-CPP) with a corresponding release of cytidine 5-monophosphate (CMP) (IspF). In Granulibacter bethesdensis (strain ATCC BAA-1260 / CGDNIH1), this protein is Bifunctional enzyme IspD/IspF.